A 479-amino-acid polypeptide reads, in one-letter code: Tegument protein VP16 homolog (479 aa).

The protein belongs to the herpesviridae tegument protein VP16 protein family. Associates with the VP16-induced complex; binding to host HCFC1 activates VP16 for association with the octamer motif-binding host protein POU2F1, to form a multiprotein-DNA complex responsible for activating transcription of the viral immediate early genes.

Its subcellular location is the virion tegument. It is found in the host nucleus. In terms of biological role, transcriptional activator of immediate-early (IE) gene products (alpha genes). Acts as a key activator of lytic infection by initiating the lytic program through the assembly of the transcriptional regulatory VP16-induced complex composed of VP16 and two cellular factors, HCFC1 and POU2F1. VP16-induced complex represents a regulatory switch: when it is on, it promotes IE-gene expression and thus lytic infection, and when it is off, it limits IE-gene transcription favoring latent infection. Functionally, may play a role in the aggregation of tegument proteins around nucleocapsids during virus morphogenesis. In Equus caballus (Horse), this protein is Tegument protein VP16 homolog.